The following is a 172-amino-acid chain: Large ribosomal subunit protein uL10 (172 aa).

The protein belongs to the universal ribosomal protein uL10 family. Part of the ribosomal stalk of the 50S ribosomal subunit. The N-terminus interacts with L11 and the large rRNA to form the base of the stalk. The C-terminus forms an elongated spine to which L12 dimers bind in a sequential fashion forming a multimeric L10(L12)X complex.

Functionally, forms part of the ribosomal stalk, playing a central role in the interaction of the ribosome with GTP-bound translation factors. This chain is Large ribosomal subunit protein uL10, found in Francisella tularensis subsp. holarctica (strain FTNF002-00 / FTA).